The sequence spans 486 residues: Glutamate--tRNA ligase (486 aa).

The 'HIGH' region signature appears at 11–21 (PSPTGVVHIGN). The short motif at 255-259 (KLSKR) is the 'KMSKS' region element. Lysine 258 provides a ligand contact to ATP.

Belongs to the class-I aminoacyl-tRNA synthetase family. Glutamate--tRNA ligase type 1 subfamily. In terms of assembly, monomer.

Its subcellular location is the cytoplasm. It catalyses the reaction tRNA(Glu) + L-glutamate + ATP = L-glutamyl-tRNA(Glu) + AMP + diphosphate. Functionally, catalyzes the attachment of glutamate to tRNA(Glu) in a two-step reaction: glutamate is first activated by ATP to form Glu-AMP and then transferred to the acceptor end of tRNA(Glu). The polypeptide is Glutamate--tRNA ligase (Streptococcus pneumoniae (strain CGSP14)).